Reading from the N-terminus, the 423-residue chain is Tegument protein UL43 (423 aa).

Residues 1–12 are compositionally biased toward polar residues; sequence MEKTPAETTAVS. The disordered stretch occupies residues 1-46; it reads MEKTPAETTAVSAGNVPRDSIPCITNVSADTRGRTRPSRPATVPQR.

Belongs to the herpesviridae US22 family.

The protein localises to the virion tegument. The chain is Tegument protein UL43 (UL43) from Homo sapiens (Human).